A 273-amino-acid chain; its full sequence is 2-dehydro-3-deoxyphosphooctonate aldolase (273 aa).

The protein belongs to the KdsA family.

Its subcellular location is the cytoplasm. The catalysed reaction is D-arabinose 5-phosphate + phosphoenolpyruvate + H2O = 3-deoxy-alpha-D-manno-2-octulosonate-8-phosphate + phosphate. Its pathway is carbohydrate biosynthesis; 3-deoxy-D-manno-octulosonate biosynthesis; 3-deoxy-D-manno-octulosonate from D-ribulose 5-phosphate: step 2/3. It participates in bacterial outer membrane biogenesis; lipopolysaccharide biosynthesis. The polypeptide is 2-dehydro-3-deoxyphosphooctonate aldolase (Nitratidesulfovibrio vulgaris (strain DP4) (Desulfovibrio vulgaris)).